Consider the following 741-residue polypeptide: Transketolase, chloroplastic (741 aa).

The segment covering 1 to 19 (MAASSSLSTLSHHQTLLSH) has biased composition (low complexity). The disordered stretch occupies residues 1–33 (MAASSSLSTLSHHQTLLSHPKTHLPTTPASSLL). A chloroplast-targeting transit peptide spans 1-66 (MAASSSLSTL…VGSASAVVRA (66 aa)). Positions 24-33 (LPTTPASSLL) are enriched in polar residues. H103 serves as a coordination point for substrate. Thiamine diphosphate contacts are provided by residues H143 and 192-194 (GPL). D233 contributes to the Mg(2+) binding site. Residues G234 and N263 each contribute to the thiamine diphosphate site. Mg(2+) is bound by residues N263 and I265. Residues H340, R434, and S461 each contribute to the substrate site. H340 contributes to the thiamine diphosphate binding site. Thiamine diphosphate contacts are provided by E488 and F515. The Proton donor role is filled by E488. Substrate is bound by residues H539, D547, and R598.

Belongs to the transketolase family. In terms of assembly, homodimer. It depends on Mg(2+) as a cofactor. The cofactor is Ca(2+). Mn(2+) is required as a cofactor. Co(2+) serves as cofactor. Requires thiamine diphosphate as cofactor.

It localises to the plastid. The protein localises to the chloroplast thylakoid membrane. The enzyme catalyses D-sedoheptulose 7-phosphate + D-glyceraldehyde 3-phosphate = aldehydo-D-ribose 5-phosphate + D-xylulose 5-phosphate. It participates in carbohydrate biosynthesis; Calvin cycle. Its function is as follows. Catalyzes the reversible transfer of a two-carbon ketol group from fructose-6-phosphate or sedoheptulose-7-phosphate to glyceraldehyde-3-phosphate to yield xylulose-5-phosphate and erythrose-4-phosphate or ribose-5-phosphate, respectively. The polypeptide is Transketolase, chloroplastic (Spinacia oleracea (Spinach)).